The sequence spans 320 residues: Replication-associated protein ORF2 (320 aa).

Catalysis depends on O-(5'-phospho-DNA)-tyrosine intermediate residues Tyr-188 and Tyr-192.

Belongs to the microviridae Rep protein family.

The catalysed reaction is ATP + (deoxyribonucleotide)n-3'-hydroxyl + 5'-phospho-(deoxyribonucleotide)m = (deoxyribonucleotide)n+m + AMP + diphosphate.. Plays an essential role in viral DNA replication. Binds the origin of replication and cleaves the dsDNA replicative form I (RFI) and becomes covalently bound to it via phosphotyrosine bond, generating the dsDNA replicative form II (RFII). In turn, viral DNA replication initiates at the 3'-OH of the cleavage site. After one round of rolling circle synthesis, protein ORF2 is linked to the newly synthesized ssDNA and joins the ends of the displaced strand to generate a circular single-stranded molecule ready to be packed into a virion. In Spiroplasma virus 4 (SpV4), this protein is Replication-associated protein ORF2.